Reading from the N-terminus, the 1339-residue chain is DNA polymerase alpha catalytic subunit (1339 aa).

Disordered stretches follow at residues 1–29 (MEDW…SEEE) and 60–89 (AKRR…HQQK). A compositionally biased stretch (basic and acidic residues) spans 8–19 (RSEEQKRCEEKG). 8 residues coordinate Zn(2+): C1179, C1182, C1215, C1218, C1235, C1244, C1274, and C1289. The CysA-type zinc-finger motif lies at 1179-1218 (CTHCQLVVPVDPHKYINDMFSSREKPPPTAPFELYVCFNC). The CysB motif motif lies at 1244-1274 (CSGGNVASVRALRAQFTYLRAMFDVPQALNC).

This sequence belongs to the DNA polymerase type-B family.

Its subcellular location is the nucleus. The enzyme catalyses DNA(n) + a 2'-deoxyribonucleoside 5'-triphosphate = DNA(n+1) + diphosphate. Its function is as follows. Polymerase alpha in a complex with DNA primase is a replicative polymerase. The sequence is that of DNA polymerase alpha catalytic subunit from Trypanosoma brucei brucei.